The following is an 858-amino-acid chain: Heat shock protein 105 kDa (858 aa).

An N-acetylserine modification is found at Ser-2. Position 471 is an N6-acetyllysine (Lys-471). 2 disordered regions span residues Lys-500–Ala-584 and Cys-796–Asp-858. The segment covering Glu-504–Met-514 has biased composition (acidic residues). 2 positions are modified to phosphoserine: Ser-509 and Ser-510. Residues Gln-532–Ser-554 are compositionally biased toward polar residues. Residue Ser-557 is modified to Phosphoserine. Thr-561 is modified (phosphothreonine). 2 stretches are compositionally biased toward basic and acidic residues: residues Glu-563 to Ala-584 and Pro-805 to Arg-814. Residue Ser-809 is modified to Phosphoserine. Thr-815 carries the phosphothreonine modification. The segment covering Ile-821 to Asn-832 has biased composition (basic and acidic residues). The segment covering Glu-849–Asp-858 has biased composition (polar residues).

The protein belongs to the heat shock protein 70 family. Interacts with HSPA8/HSC70. Interacts with HSPA1A (via NBD) and HSPA1B (via NBD). Phosphorylation on Ser-509 may be important for regulation of the HSPA8/HSC70 chaperone activity.

It is found in the cytoplasm. Functionally, acts as a nucleotide-exchange factor (NEF) for chaperone proteins HSPA1A and HSPA1B, promoting the release of ADP from HSPA1A/B thereby triggering substrate release. Prevents the aggregation of denatured proteins in cells under severe stress, on which the ATP levels decrease markedly. Inhibits HSPA8/HSC70 ATPase and chaperone activities. This is Heat shock protein 105 kDa (HSPH1) from Pongo abelii (Sumatran orangutan).